The chain runs to 971 residues: MTSIYTSDLKNHRRAPPPPNGAAGSGSGSGSGSGSGSGSLANIVTSSNSLGVTANQTKPIQLNINSSKRQSGWVHVKDDGIFTSFRWNKRFMVINDKTLNFYKQEPYSSDGNSNSNTPDLSFPLYLINNINLKPNSGYSKTSQSFEIVPKNNNKSILISVKTNNDYLDWLDAFTTKCPLVQIGENNSGVSSSHPHLQIQHLTNGSLNGNSSSSPTSGLLSSSVLTGGNSGVSGPINFTHKVHVGFDPASGNFTGLPDTWKSLLQHSKITNEDWKKDPVAVIEVLEFYSDINGGNSAAGTPIGSPMINSKTNNNNNDPNNYSSTKNNVQEANLQEWVKPPAKSTVSQFKPSRAAPKPPTPYHLTQLNGSSHQHTSSSGSLPSSGNNNNNNSTNNNNTKNVSPLNNLMNKSELIPARRAPPPPTSGTSSDTYSNKNHQDRSGYEQQRQQRTDSSQQQQQQKQHQYQQKSQQQQQQPQQPLSSHQGGTSHIPKQVPPTLPSSGPPTQAASGKSMPSKIHPDLKIQQGTNNYIKSSGTDANQVDGDAKQFIKPFNLQSKKSQQQLASKQPSPPSSQQQQQKPMTSHGLMGTSHSVTKPLNPVNDPIKPLNLKSSKSKEALNETSGVSKTPSPTDKSNKPTAPASGPAVTKTAKQLKKERERLNDLQIIAKLKTVVNNQDPKPLFRIVEKAGQGASGNVYLAEMIKDNNRKIAIKQMDLDAQPRKELIINEILVMKDSQHKNIVNFLDSYLIGDNELWVIMEYMQGGSLTEIIENNDFKLNEKQIATICFETLKGLQHLHKKHIIHRDIKSDNVLLDAYGNVKITDFGFCAKLTDQRNKRATMVGTPYWMAPEVVKQKEYDEKVDVWSLGIMTIEMIEGEPPYLNEEPLKALYLIATNGTPKLKKPELLSNSIKKFLSICLCVDVRYRASTDELLEHSFIQHKSGKIEELAPLLEWKKQQQKHQQHKQETSDTGFA.

A disordered region spans residues 1-40 (MTSIYTSDLKNHRRAPPPPNGAAGSGSGSGSGSGSGSGSL). Residues 23–37 (AGSGSGSGSGSGSGS) are compositionally biased toward gly residues. A PH domain is found at 67–178 (SKRQSGWVHV…WLDAFTTKCP (112 aa)). Residues 201 to 221 (LTNGSLNGNSSSSPTSGLLSS) are disordered. Residues 231–244 (VSGPINFTHKVHVG) enclose the CRIB domain. Disordered stretches follow at residues 292–517 (GGNS…KIHP) and 554–653 (SKKS…QLKK). Low complexity-rich tracts occupy residues 307-326 (NSKTNNNNNDPNNYSSTKNN) and 365-404 (LNGSSHQHTSSSGSLPSSGNNNNNNSTNNNNTKNVSPLNN). Polar residues predominate over residues 423–433 (SGTSSDTYSNK). Basic and acidic residues predominate over residues 434 to 448 (NHQDRSGYEQQRQQR). Residues 449–482 (TDSSQQQQQQKQHQYQQKSQQQQQQPQQPLSSHQ) show a composition bias toward low complexity. A compositionally biased stretch (pro residues) spans 491-500 (QVPPTLPSSG). Over residues 554–578 (SKKSQQQLASKQPSPPSSQQQQQKP) the composition is skewed to low complexity. Residues 617–630 (NETSGVSKTPSPTD) are compositionally biased toward polar residues. The 256-residue stretch at 680 to 935 (FRIVEKAGQG…TDELLEHSFI (256 aa)) folds into the Protein kinase domain. Residues 686–694 (AGQGASGNV) and lysine 710 each bind ATP. Catalysis depends on aspartate 803, which acts as the Proton acceptor.

Belongs to the protein kinase superfamily. STE Ser/Thr protein kinase family. STE20 subfamily.

It carries out the reaction L-seryl-[protein] + ATP = O-phospho-L-seryl-[protein] + ADP + H(+). The enzyme catalyses L-threonyl-[protein] + ATP = O-phospho-L-threonyl-[protein] + ADP + H(+). Functionally, essential for virulence and morphological switching (hyphal formation) of C.albicans. The polypeptide is Serine/threonine-protein kinase CLA4 (CLA4) (Candida albicans (Yeast)).